We begin with the raw amino-acid sequence, 247 residues long: MSRKKNRLTGVDALNEAFDAVDHQPLLDHLGVDIQRDLLVLALTHRSFANENGMLPNNERLEFLGDAVLGLSVANKLYEQYPSSPESDVSKMRASIVSRYGLADIAREIDLGNHILLGKGELLTEGRSKDSILADTTEALFGAIFRQHGFETARDVILRLFAYKIDNASARGIHQDWKTTLQEELAQRKRPMAEYSATSVGPDHDLVFTAIVTLEGEEMGRGEGPNKKLAEQEAAHQAFRKLRESRA.

The RNase III domain maps to Val21 to Gly149. Glu62 is a Mg(2+) binding site. Residue Asp66 is part of the active site. 2 residues coordinate Mg(2+): Asp135 and Glu138. Residue Glu138 is part of the active site. Residues Asp176–Glu244 form the DRBM domain.

It belongs to the ribonuclease III family. As to quaternary structure, homodimer. Mg(2+) serves as cofactor.

It localises to the cytoplasm. It catalyses the reaction Endonucleolytic cleavage to 5'-phosphomonoester.. Its function is as follows. Digests double-stranded RNA. Involved in the processing of primary rRNA transcript to yield the immediate precursors to the large and small rRNAs (23S and 16S). Processes some mRNAs, and tRNAs when they are encoded in the rRNA operon. Processes pre-crRNA and tracrRNA of type II CRISPR loci if present in the organism. This Corynebacterium glutamicum (strain ATCC 13032 / DSM 20300 / JCM 1318 / BCRC 11384 / CCUG 27702 / LMG 3730 / NBRC 12168 / NCIMB 10025 / NRRL B-2784 / 534) protein is Ribonuclease 3.